We begin with the raw amino-acid sequence, 481 residues long: Extracellular exo-alpha-(1-&gt;5)-L-arabinofuranosidase (481 aa).

Residues Met-1–Ala-27 form the signal peptide. The tract at residues Phe-37–Pro-336 is catalytic. Catalysis depends on Asp-47, which acts as the Proton acceptor. A substrate-binding site is contributed by Asn-186. Catalysis depends on Glu-223, which acts as the Proton donor. Substrate is bound by residues His-287, Arg-321, His-363 to Phe-366, Asp-379, His-457 to Asn-460, and Asp-475. Positions Val-349–Tyr-479 are ABD.

The protein belongs to the glycosyl hydrolase 43 family.

It is found in the secreted. It carries out the reaction Hydrolysis of terminal non-reducing alpha-L-arabinofuranoside residues in alpha-L-arabinosides.. The protein operates within glycan metabolism; L-arabinan degradation. Functionally, involved in the degradation of arabinan and is a key enzyme in the complete degradation of the plant cell wall. Catalyzes only the cleavage of terminal alpha-(1-&gt;5) arabinofuranosyl bonds of arabinan present in the arabinofuranosyl polysaccharides or oligosaccharides. It cannot act on other arabinose-containing polysaccharides and arabinoxylo-oligosaccharides. This Streptomyces avermitilis (strain ATCC 31267 / DSM 46492 / JCM 5070 / NBRC 14893 / NCIMB 12804 / NRRL 8165 / MA-4680) protein is Extracellular exo-alpha-(1-&gt;5)-L-arabinofuranosidase.